Reading from the N-terminus, the 123-residue chain is Protein Wnt-7b (123 aa).

Ser1 is lipidated: O-palmitoleoyl serine; by PORCN. The tract at residues 33–61 (VEAVRATRLRQPTFLKIKKPRTYRKPMVT) is disordered linker. A disulfide bridge connects residues Cys89 and Cys104. An N-linked (GlcNAc...) asparagine glycan is attached at Asn90.

Belongs to the Wnt family. Post-translationally, palmitoleoylation is required for efficient binding to frizzled receptors. Depalmitoleoylation leads to Wnt signaling pathway inhibition.

It localises to the secreted. Its subcellular location is the extracellular space. It is found in the extracellular matrix. Ligand for members of the frizzled family of seven transmembrane receptors that functions in the canonical Wnt/beta-catenin signaling pathway. Required for normal fusion of the chorion and the allantois during placenta development. Required for central nervous system (CNS) angiogenesis and blood-brain barrier regulation. The polypeptide is Protein Wnt-7b (WNT-7B) (Alopias vulpinus (Common thresher shark)).